The sequence spans 263 residues: L-aspartate dehydrogenase (263 aa).

NAD(+) contacts are provided by alanine 120 and asparagine 186. The active site involves histidine 216.

It belongs to the L-aspartate dehydrogenase family.

The catalysed reaction is L-aspartate + NADP(+) + H2O = oxaloacetate + NH4(+) + NADPH + H(+). The enzyme catalyses L-aspartate + NAD(+) + H2O = oxaloacetate + NH4(+) + NADH + H(+). It participates in cofactor biosynthesis; NAD(+) biosynthesis; iminoaspartate from L-aspartate (dehydrogenase route): step 1/1. Functionally, specifically catalyzes the NAD or NADP-dependent dehydrogenation of L-aspartate to iminoaspartate. The sequence is that of L-aspartate dehydrogenase from Acinetobacter baylyi (strain ATCC 33305 / BD413 / ADP1).